The sequence spans 701 residues: Polyribonucleotide nucleotidyltransferase (701 aa).

The Mg(2+) site is built by D485 and D491. A KH domain is found at 552–611 (PKTQIMSINPDKIRDVIGAGGKVINKIIQDTGVKIDIKEDGTVFVSSTDHNGVNEAIKII). The S1 motif domain occupies 621 to 689 (GEVYLGKVTK…NQGRINLSRK (69 aa)).

This sequence belongs to the polyribonucleotide nucleotidyltransferase family. Mg(2+) is required as a cofactor.

The protein localises to the cytoplasm. It catalyses the reaction RNA(n+1) + phosphate = RNA(n) + a ribonucleoside 5'-diphosphate. In terms of biological role, involved in mRNA degradation. Catalyzes the phosphorolysis of single-stranded polyribonucleotides processively in the 3'- to 5'-direction. The chain is Polyribonucleotide nucleotidyltransferase from Clostridium beijerinckii (strain ATCC 51743 / NCIMB 8052) (Clostridium acetobutylicum).